The chain runs to 224 residues: Cytidylate kinase (224 aa).

11–19 lines the ATP pocket; it reads GPAAAGKST.

This sequence belongs to the cytidylate kinase family. Type 1 subfamily.

It is found in the cytoplasm. The catalysed reaction is CMP + ATP = CDP + ADP. The enzyme catalyses dCMP + ATP = dCDP + ADP. The chain is Cytidylate kinase from Bacillus velezensis (strain DSM 23117 / BGSC 10A6 / LMG 26770 / FZB42) (Bacillus amyloliquefaciens subsp. plantarum).